A 513-amino-acid polypeptide reads, in one-letter code: Transmembrane protein 151B (513 aa).

The tract at residues 1–29 (MSPAAPVTESSAAEVHREQTDAPREPQRP) is disordered. The segment covering 14–28 (EVHREQTDAPREPQR) has biased composition (basic and acidic residues). Helical transmembrane passes span 46 to 66 (CLLL…CQVT), 93 to 113 (YIYI…VECW), and 274 to 294 (LPWY…LSWP). Residues Asn-366, Asn-418, and Asn-505 are each glycosylated (N-linked (GlcNAc...) asparagine).

This sequence belongs to the TMEM151 family.

It localises to the membrane. This Danio rerio (Zebrafish) protein is Transmembrane protein 151B (tmem151b).